Consider the following 110-residue polypeptide: NADH-quinone oxidoreductase subunit K (110 aa).

3 consecutive transmembrane segments (helical) span residues 7 to 27 (LGSY…GVFV), 31 to 51 (IIAI…NFIA), and 73 to 93 (IFVI…VIAI).

This sequence belongs to the complex I subunit 4L family. NDH-1 is composed of 14 different subunits. Subunits NuoA, H, J, K, L, M, N constitute the membrane sector of the complex.

The protein resides in the cell membrane. The catalysed reaction is a quinone + NADH + 5 H(+)(in) = a quinol + NAD(+) + 4 H(+)(out). Functionally, NDH-1 shuttles electrons from NADH, via FMN and iron-sulfur (Fe-S) centers, to quinones in the respiratory chain. The immediate electron acceptor for the enzyme in this species is believed to be a menaquinone. Couples the redox reaction to proton translocation (for every two electrons transferred, four hydrogen ions are translocated across the cytoplasmic membrane), and thus conserves the redox energy in a proton gradient. This is NADH-quinone oxidoreductase subunit K from Desulfitobacterium hafniense (strain DSM 10664 / DCB-2).